Here is a 403-residue protein sequence, read N- to C-terminus: Phosphoglycerate kinase (403 aa).

Residues 21–23 (DFN), Arg36, 59–62 (HLGR), Arg119, and Arg154 contribute to the substrate site. Residues Lys207, Gly299, Glu330, and 357–360 (GGDA) each bind ATP.

This sequence belongs to the phosphoglycerate kinase family. As to quaternary structure, monomer.

The protein localises to the cytoplasm. It carries out the reaction (2R)-3-phosphoglycerate + ATP = (2R)-3-phospho-glyceroyl phosphate + ADP. The protein operates within carbohydrate degradation; glycolysis; pyruvate from D-glyceraldehyde 3-phosphate: step 2/5. The protein is Phosphoglycerate kinase of Chlamydia trachomatis serovar A (strain ATCC VR-571B / DSM 19440 / HAR-13).